The following is a 97-amino-acid chain: Putative mitochondrial import inner membrane translocase subunit Tim8 A-B (97 aa).

Positions 43-66 (CWEKCMDKPGPRLDGRAELCLVNC) match the Twin CX3C motif motif. 2 cysteine pairs are disulfide-bonded: cysteine 43-cysteine 66 and cysteine 47-cysteine 62.

It belongs to the small Tim family. As to quaternary structure, heterohexamer; possibly composed of 3 copies of TIMM8AB and 3 copies of TIMM13.

The protein localises to the mitochondrion inner membrane. Its function is as follows. Putative mitochondrial intermembrane chaperone that participates in the import and insertion of some multi-pass transmembrane proteins into the mitochondrial inner membrane. Also required for the transfer of beta-barrel precursors from the TOM complex to the sorting and assembly machinery (SAM complex) of the outer membrane. Acts as a chaperone-like protein that protects the hydrophobic precursors from aggregation and guide them through the mitochondrial intermembrane space. In Mus musculus (Mouse), this protein is Putative mitochondrial import inner membrane translocase subunit Tim8 A-B (Timm8a2).